The primary structure comprises 153 residues: UPF0251 protein Daud_0090 (153 aa).

Over residues Glu129–Ser138 the composition is skewed to basic and acidic residues. Residues Glu129–Arg153 are disordered. Residues Arg139–Arg153 are compositionally biased toward basic residues.

The protein belongs to the UPF0251 family.

In Desulforudis audaxviator (strain MP104C), this protein is UPF0251 protein Daud_0090.